We begin with the raw amino-acid sequence, 159 residues long: Nucleotide-binding protein PST_3153 (159 aa).

This sequence belongs to the YajQ family.

In terms of biological role, nucleotide-binding protein. The protein is Nucleotide-binding protein PST_3153 of Stutzerimonas stutzeri (strain A1501) (Pseudomonas stutzeri).